The chain runs to 348 residues: tRNA N6-adenosine threonylcarbamoyltransferase (348 aa).

Fe cation is bound by residues His-114 and His-118. Residues 137–141, Asp-171, Gly-184, Asp-188, and Asn-283 each bind substrate; that span reads LVSGG. Asp-311 lines the Fe cation pocket.

Belongs to the KAE1 / TsaD family. Requires Fe(2+) as cofactor.

The protein resides in the cytoplasm. The enzyme catalyses L-threonylcarbamoyladenylate + adenosine(37) in tRNA = N(6)-L-threonylcarbamoyladenosine(37) in tRNA + AMP + H(+). Functionally, required for the formation of a threonylcarbamoyl group on adenosine at position 37 (t(6)A37) in tRNAs that read codons beginning with adenine. Is involved in the transfer of the threonylcarbamoyl moiety of threonylcarbamoyl-AMP (TC-AMP) to the N6 group of A37, together with TsaE and TsaB. TsaD likely plays a direct catalytic role in this reaction. The sequence is that of tRNA N6-adenosine threonylcarbamoyltransferase from Nocardioides sp. (strain ATCC BAA-499 / JS614).